The following is a 167-amino-acid chain: Lipoprotein signal peptidase (167 aa).

3 consecutive transmembrane segments (helical) span residues Leu10–Val30, Trp68–Leu88, and Ser98–Leu118. Active-site residues include Asp124 and Asp142. A helical membrane pass occupies residues Phe138 to Phe158.

It belongs to the peptidase A8 family.

Its subcellular location is the cell inner membrane. The enzyme catalyses Release of signal peptides from bacterial membrane prolipoproteins. Hydrolyzes -Xaa-Yaa-Zaa-|-(S,diacylglyceryl)Cys-, in which Xaa is hydrophobic (preferably Leu), and Yaa (Ala or Ser) and Zaa (Gly or Ala) have small, neutral side chains.. It participates in protein modification; lipoprotein biosynthesis (signal peptide cleavage). This protein specifically catalyzes the removal of signal peptides from prolipoproteins. This chain is Lipoprotein signal peptidase, found in Xylella fastidiosa (strain M23).